Reading from the N-terminus, the 307-residue chain is Elongation factor Ts (307 aa).

The interval 80-83 is involved in Mg(2+) ion dislocation from EF-Tu; it reads TDFV.

It belongs to the EF-Ts family.

It localises to the cytoplasm. Its function is as follows. Associates with the EF-Tu.GDP complex and induces the exchange of GDP to GTP. It remains bound to the aminoacyl-tRNA.EF-Tu.GTP complex up to the GTP hydrolysis stage on the ribosome. In Albidiferax ferrireducens (strain ATCC BAA-621 / DSM 15236 / T118) (Rhodoferax ferrireducens), this protein is Elongation factor Ts.